A 263-amino-acid polypeptide reads, in one-letter code: Dihydromethanophenazine:CoB--CoM heterodisulfide reductase subunit E (263 aa).

A run of 5 helical transmembrane segments spans residues 18–38, 108–128, 150–170, 184–204, and 221–241; these read TFVQIMIFSTIAIVIFLYGLI, VMHLFIFGGWMTLFALSGMMF, FLSIPNYIFGYILLIGVLVAL, IMYDWVLIGIVFLVTISGFIA, and VAPPAALFHSIFSLLFCIAFI.

Belongs to the HdrE family. In terms of assembly, the dihydromethanophenazine:CoB--CoM heterodisulfide reductase is composed of two subunits; HdrD and HdrE. Heme b is required as a cofactor.

The protein localises to the cell membrane. It catalyses the reaction methanophenazine + coenzyme B + coenzyme M = dihydromethanophenazine + coenzyme M-coenzyme B heterodisulfide. Its pathway is cofactor metabolism; coenzyme M-coenzyme B heterodisulfide reduction; coenzyme B and coenzyme M from coenzyme M-coenzyme B heterodisulfide: step 1/1. Its function is as follows. Part of a complex that catalyzes the reversible reduction of CoM-S-S-CoB to the thiol-coenzymes H-S-CoM (coenzyme M) and H-S-CoB (coenzyme B). HdrE may be responsible for anchoring the complex to the membrane. The polypeptide is Dihydromethanophenazine:CoB--CoM heterodisulfide reductase subunit E (hdrE) (Methanosarcina barkeri (strain Fusaro / DSM 804)).